The sequence spans 309 residues: Isoaspartyl peptidase/L-asparaginase (309 aa).

The active-site Nucleophile is T166. Residues 194–197 and 217–220 contribute to the substrate site; these read RVGD and TGHG.

The protein belongs to the Ntn-hydrolase family. In terms of assembly, heterodimer of an alpha and beta chain produced by autocleavage. In terms of processing, cleaved into an alpha and beta chain by autocatalysis; this activates the enzyme. The N-terminal residue of the beta subunit is responsible for the nucleophile hydrolase activity.

The protein localises to the cytoplasm. The catalysed reaction is L-asparagine + H2O = L-aspartate + NH4(+). It carries out the reaction Cleavage of a beta-linked Asp residue from the N-terminus of a polypeptide.. Has both L-asparaginase and beta-aspartyl peptidase activity. Does not have aspartylglucosaminidase activity and is inactive toward GlcNAc-L-Asn. Likewise, has no activity toward glutamine. In Xenopus laevis (African clawed frog), this protein is Isoaspartyl peptidase/L-asparaginase (asrgl1).